The following is a 605-amino-acid chain: Isocitrate dehydrogenase kinase/phosphatase (605 aa).

Residues 327 to 333 (APGIKGL) and lysine 348 contribute to the ATP site. Aspartate 383 is a catalytic residue.

Belongs to the AceK family.

The protein localises to the cytoplasm. The enzyme catalyses L-seryl-[isocitrate dehydrogenase] + ATP = O-phospho-L-seryl-[isocitrate dehydrogenase] + ADP + H(+). Functionally, bifunctional enzyme which can phosphorylate or dephosphorylate isocitrate dehydrogenase (IDH) on a specific serine residue. This is a regulatory mechanism which enables bacteria to bypass the Krebs cycle via the glyoxylate shunt in response to the source of carbon. When bacteria are grown on glucose, IDH is fully active and unphosphorylated, but when grown on acetate or ethanol, the activity of IDH declines drastically concomitant with its phosphorylation. The polypeptide is Isocitrate dehydrogenase kinase/phosphatase (Burkholderia orbicola (strain MC0-3)).